The sequence spans 64 residues: Conotoxin Leo-T1 (64 aa).

Positions 1-22 are cleaved as a signal peptide; it reads MRCLPVFIILLLLIPSAPSVDA. Residues 23-48 constitute a propeptide that is removed on maturation; it reads QPKTEDDVPLASLHDNAKLTLQGLWD.

This sequence belongs to the conotoxin T superfamily. Post-translationally, contains 2 disulfide bonds that can be either 'C1-C3, C2-C4' or 'C1-C4, C2-C3', since these disulfide connectivities have been observed for conotoxins with cysteine framework V (for examples, see AC P0DQQ7 and AC P81755). As to expression, expressed by the venom duct.

It localises to the secreted. This chain is Conotoxin Leo-T1, found in Conus leopardus (Leopard cone).